We begin with the raw amino-acid sequence, 130 residues long: Protein ApaG (130 aa).

The 125-residue stretch at 3 to 127 (EHESCGVRIS…FSLDRPSDRL (125 aa)) folds into the ApaG domain.

This chain is Protein ApaG, found in Maricaulis maris (strain MCS10) (Caulobacter maris).